Here is a 121-residue protein sequence, read N- to C-terminus: Ribonuclease P protein component (121 aa).

The protein belongs to the RnpA family. As to quaternary structure, consists of a catalytic RNA component (M1 or rnpB) and a protein subunit.

The catalysed reaction is Endonucleolytic cleavage of RNA, removing 5'-extranucleotides from tRNA precursor.. Its function is as follows. RNaseP catalyzes the removal of the 5'-leader sequence from pre-tRNA to produce the mature 5'-terminus. It can also cleave other RNA substrates such as 4.5S RNA. The protein component plays an auxiliary but essential role in vivo by binding to the 5'-leader sequence and broadening the substrate specificity of the ribozyme. In Chromobacterium violaceum (strain ATCC 12472 / DSM 30191 / JCM 1249 / CCUG 213 / NBRC 12614 / NCIMB 9131 / NCTC 9757 / MK), this protein is Ribonuclease P protein component.